The following is an 838-amino-acid chain: Lymphoid-specific helicase (838 aa).

The stretch at 30-115 (MLEEEEQLEA…SLKVKKGKNS (86 aa)) forms a coiled coil. Residues 94 to 108 (QKKKEKLERKKESLK) are compositionally biased toward basic and acidic residues. The disordered stretch occupies residues 94–135 (QKKKEKLERKKESLKVKKGKNSIDASEEKPVMRKKRGREDES). Ser115 bears the Phosphoserine mark. A compositionally biased stretch (basic and acidic residues) spans 119-134 (SEEKPVMRKKRGREDE). Residues 235–403 (RMLWENGING…WSLLNFLLPD (169 aa)) enclose the Helicase ATP-binding domain. 248–255 (DEMGLGKT) is a binding site for ATP. The short motif at 354 to 357 (DEGH) is the DEAH box element. Residues Ser503 and Ser515 each carry the phosphoserine modification. A Helicase C-terminal domain is found at 603–767 (ILDRMLPELK…GLNLSKNFLD (165 aa)).

Belongs to the SNF2/RAD54 helicase family. In terms of tissue distribution, highly expressed in proliferative tissues such as adult thymus and testis, and expressed at lower levels in uterus, small intestine, colon, and peripheral blood mononuclear cells. Also expressed in neoplastic cell lines including those derived from myeloid and lymphoid leukemias.

It localises to the nucleus. Plays an essential role in normal development and survival. Involved in regulation of the expansion or survival of lymphoid cells. Required for de novo or maintenance DNA methylation. May control silencing of the imprinted CDKN1C gene through DNA methylation. May play a role in formation and organization of heterochromatin, implying a functional role in the regulation of transcription and mitosis. The chain is Lymphoid-specific helicase from Homo sapiens (Human).